The primary structure comprises 827 residues: Protein SEY1 (827 aa).

Residues 1-26 are disordered; the sequence is MSQSSPSNAETDEDLSTTSSSSSFVP. Residues 1-719 are Cytoplasmic-facing; the sequence is MSQSSPSNAE…KRSIVQHVTQ (719 aa). One can recognise a GB1/RHD3-type G domain in the interval 63–291; the sequence is GNNYHIISVF…VKKDLFRPNY (229 aa). Position 73 to 80 (73 to 80) interacts with GTP; it reads GSQSTGKS. 2 coiled-coil regions span residues 389–409 and 472–492; these read KSVY…KFRE and VSNL…VELK. Residues 720–740 traverse the membrane as a helical segment; that stretch reads IPYYIYLVIMVLGWNEFMAIV. Topologically, residues 741-743 are lumenal; it reads RNP. The chain crosses the membrane as a helical span at residues 744-764; it reads LFFSLVLVFGAGLYILYSMNL. The Cytoplasmic segment spans residues 765–827; it reads LKPAMVVVQR…VVETIEMQDL (63 aa). The stretch at 803–823 forms a coiled coil; that stretch reads QKISASNREKVEEEKVVETIE.

This sequence belongs to the TRAFAC class dynamin-like GTPase superfamily. GB1/RHD3 GTPase family. RHD3 subfamily.

The protein resides in the endoplasmic reticulum membrane. Functionally, cooperates with the reticulon proteins and tubule-shaping DP1 family proteins to generate and maintain the structure of the tubular endoplasmic reticulum network. Has GTPase activity, which is required for its function in ER organization. This chain is Protein SEY1, found in Scheffersomyces stipitis (strain ATCC 58785 / CBS 6054 / NBRC 10063 / NRRL Y-11545) (Yeast).